Here is a 104-residue protein sequence, read N- to C-terminus: Photosystem II reaction center Psb28 protein (104 aa).

Belongs to the Psb28 family. In terms of assembly, part of the photosystem II complex.

The protein localises to the cellular thylakoid membrane. The chain is Photosystem II reaction center Psb28 protein from Synechococcus sp. (strain JA-2-3B'a(2-13)) (Cyanobacteria bacterium Yellowstone B-Prime).